Consider the following 271-residue polypeptide: MLKIADTTFTSRLFTGTGKFSSPELMLEALRASGSQLITMAMKRVDLQSGNDAILAPLRQLGVRLLPNTSGAKTAEEAIFAARLAREALNTHWVKLEVHPDVRYLLPDPIETLKAAEVLVKEGFVVLPYCGADPVLCKRLEEVGCAAVMPLGSPIGSNLGLRTRDFLQIIIEQSKVPVVVDAGIGAPSHALEALELGADAVLVNTAIAVAHSPVQMAHAFRLAVESGERARLAGLGASPFNPSQPDTLQLRATATSPLTGFLSQLEEQDHV.

Lysine 95 functions as the Schiff-base intermediate with DXP in the catalytic mechanism. 1-deoxy-D-xylulose 5-phosphate is bound by residues glycine 156, 182–183 (AG), and 204–205 (NT).

Belongs to the ThiG family. As to quaternary structure, homotetramer. Forms heterodimers with either ThiH or ThiS.

The protein resides in the cytoplasm. It catalyses the reaction [ThiS sulfur-carrier protein]-C-terminal-Gly-aminoethanethioate + 2-iminoacetate + 1-deoxy-D-xylulose 5-phosphate = [ThiS sulfur-carrier protein]-C-terminal Gly-Gly + 2-[(2R,5Z)-2-carboxy-4-methylthiazol-5(2H)-ylidene]ethyl phosphate + 2 H2O + H(+). It participates in cofactor biosynthesis; thiamine diphosphate biosynthesis. In terms of biological role, catalyzes the rearrangement of 1-deoxy-D-xylulose 5-phosphate (DXP) to produce the thiazole phosphate moiety of thiamine. Sulfur is provided by the thiocarboxylate moiety of the carrier protein ThiS. In vitro, sulfur can be provided by H(2)S. The protein is Thiazole synthase of Yersinia pestis.